The sequence spans 290 residues: Prepilin leader peptidase/N-methyltransferase (290 aa).

A helical membrane pass occupies residues Leu14–Ile34. Zn(2+) is bound by residues Cys74, Cys77, Cys99, and Cys102. 6 helical membrane-spanning segments follow: residues Ile106–Met126, Pro130–Ile150, Leu161–Leu181, Val185–Leu205, Pro232–Leu252, and Ile261–Ile281.

This sequence belongs to the peptidase A24 family. Requires Zn(2+) as cofactor.

It is found in the cell inner membrane. It catalyses the reaction Typically cleaves a -Gly-|-Phe- bond to release an N-terminal, basic peptide of 5-8 residues from type IV prepilin, and then N-methylates the new N-terminal amino group, the methyl donor being S-adenosyl-L-methionine.. In terms of biological role, plays an essential role in type IV pili and type II pseudopili formation by proteolytically removing the leader sequence from substrate proteins and subsequently monomethylating the alpha-amino group of the newly exposed N-terminal phenylalanine. The chain is Prepilin leader peptidase/N-methyltransferase (tapD) from Aeromonas hydrophila.